Reading from the N-terminus, the 1070-residue chain is Carbamoyl phosphate synthase large chain (1070 aa).

A carboxyphosphate synthetic domain region spans residues 1–401 (MPKRDDIKTI…ALLKAVRSLE (401 aa)). ATP is bound by residues Arg129, Arg169, Gly175, Gly176, Lys208, Ile210, Glu215, Gly241, Ile242, His243, Gln284, and Glu298. Positions 133-327 (RDLMNELGEP…IAKLAAKIAV (195 aa)) constitute an ATP-grasp 1 domain. 3 residues coordinate Mg(2+): Gln284, Glu298, and Asn300. Residues Gln284, Glu298, and Asn300 each contribute to the Mn(2+) site. The tract at residues 402 to 546 (IGADHLLLEE…YSTYEDENES (145 aa)) is oligomerization domain. A carbamoyl phosphate synthetic domain region spans residues 547–929 (IRSSKESVIV…ALYKGFVASG (383 aa)). The ATP-grasp 2 domain occupies 671–861 (EKALEILQIP…MANVATRVIL (191 aa)). Positions 707, 746, 748, 752, 777, 778, 779, 780, 820, and 832 each coordinate ATP. 3 residues coordinate Mg(2+): Gln820, Glu832, and Asn834. Mn(2+) contacts are provided by Gln820, Glu832, and Asn834. Positions 930–1070 (TTMHDYGTVL…SEVKQPKARV (141 aa)) constitute an MGS-like domain. Positions 930–1070 (TTMHDYGTVL…SEVKQPKARV (141 aa)) are allosteric domain.

Belongs to the CarB family. Composed of two chains; the small (or glutamine) chain promotes the hydrolysis of glutamine to ammonia, which is used by the large (or ammonia) chain to synthesize carbamoyl phosphate. Tetramer of heterodimers (alpha,beta)4. The cofactor is Mg(2+). Requires Mn(2+) as cofactor.

The catalysed reaction is hydrogencarbonate + L-glutamine + 2 ATP + H2O = carbamoyl phosphate + L-glutamate + 2 ADP + phosphate + 2 H(+). The enzyme catalyses hydrogencarbonate + NH4(+) + 2 ATP = carbamoyl phosphate + 2 ADP + phosphate + 2 H(+). Its pathway is amino-acid biosynthesis; L-arginine biosynthesis; carbamoyl phosphate from bicarbonate: step 1/1. It functions in the pathway pyrimidine metabolism; UMP biosynthesis via de novo pathway; (S)-dihydroorotate from bicarbonate: step 1/3. In terms of biological role, large subunit of the glutamine-dependent carbamoyl phosphate synthetase (CPSase). CPSase catalyzes the formation of carbamoyl phosphate from the ammonia moiety of glutamine, carbonate, and phosphate donated by ATP, constituting the first step of 2 biosynthetic pathways, one leading to arginine and/or urea and the other to pyrimidine nucleotides. The large subunit (synthetase) binds the substrates ammonia (free or transferred from glutamine from the small subunit), hydrogencarbonate and ATP and carries out an ATP-coupled ligase reaction, activating hydrogencarbonate by forming carboxy phosphate which reacts with ammonia to form carbamoyl phosphate. This Listeria innocua serovar 6a (strain ATCC BAA-680 / CLIP 11262) protein is Carbamoyl phosphate synthase large chain.